Consider the following 38-residue polypeptide: uncharacterized protein (38 aa).

The protein belongs to the asfivirus C84L family.

This is an uncharacterized protein from Ornithodoros (relapsing fever ticks).